A 77-amino-acid polypeptide reads, in one-letter code: Sec-independent protein translocase protein TatA (77 aa).

Residues 1-21 (MGGISIWQLLIIALIVVLLFG) traverse the membrane as a helical segment. 2 stretches are compositionally biased toward basic and acidic residues: residues 47–56 (EKKALEDKEA) and 65–77 (TEKKPEADKKEQA). The segment at 47-77 (EKKALEDKEAAAQTTQQATEKKPEADKKEQA) is disordered.

This sequence belongs to the TatA/E family. The Tat system comprises two distinct complexes: a TatABC complex, containing multiple copies of TatA, TatB and TatC subunits, and a separate TatA complex, containing only TatA subunits. Substrates initially bind to the TatABC complex, which probably triggers association of the separate TatA complex to form the active translocon.

Its subcellular location is the cell inner membrane. Its function is as follows. Part of the twin-arginine translocation (Tat) system that transports large folded proteins containing a characteristic twin-arginine motif in their signal peptide across membranes. TatA could form the protein-conducting channel of the Tat system. The sequence is that of Sec-independent protein translocase protein TatA from Shewanella amazonensis (strain ATCC BAA-1098 / SB2B).